A 623-amino-acid chain; its full sequence is E3 ubiquitin-protein ligase ORTHRUS 5 (623 aa).

Residues 12–62 (DGVCMRCQVNPPSEETLTCGTCVTPWHVSCLLPESLASSTGDWECPDCSGV) form a PHD-type zinc finger. Residues 129–169 (CSICIQLPERPVTTPCGHNFCLKCFEKWAVGQGKLTCMICR) form an RING-type 1 zinc finger. The YDG domain maps to 258-407 (TRNQGVLVGE…HKMCRYLFVR (150 aa)). The segment at 498 to 555 (CQICRKVLSLPVTTPCAHNFCKACLEAKFAGITQLRDRSNGVRKLRAKKNIMTCPCCT) adopts an RING-type 2 zinc-finger fold. Residues 580–623 (KSEEEAEVAESSNISEEEGEEESEPPTKKIKMDKNSVGGTSLSA) form a disordered region. Positions 594–603 (SEEEGEEESE) are enriched in acidic residues. The span at 604-613 (PPTKKIKMDK) shows a compositional bias: basic and acidic residues.

In terms of tissue distribution, expressed in inflorescences.

The protein localises to the nucleus. The catalysed reaction is S-ubiquitinyl-[E2 ubiquitin-conjugating enzyme]-L-cysteine + [acceptor protein]-L-lysine = [E2 ubiquitin-conjugating enzyme]-L-cysteine + N(6)-ubiquitinyl-[acceptor protein]-L-lysine.. Its pathway is protein modification; protein ubiquitination. Functionally, E3 ubiquitin-protein ligase. Participates in CpG methylation-dependent transcriptional regulation and epigenetic transcriptional silencing. Mediates ubiquitination with the E2 ubiquitin-conjugating enzyme UBC11. In Arabidopsis thaliana (Mouse-ear cress), this protein is E3 ubiquitin-protein ligase ORTHRUS 5 (ORTH5).